A 307-amino-acid chain; its full sequence is Furaquinocin biosynthesis prenyltransferase (307 aa).

The protein belongs to the aromatic prenyltransferase family. In terms of assembly, monomer.

The catalysed reaction is 2-O,3-dimethylflaviolin + (2E)-geranyl diphosphate = 6-linalyl-2-O,3-dimethylflaviolin + diphosphate. It catalyses the reaction 2-O,3-dimethylflaviolin + (2E)-geranyl diphosphate + H(+) = 7-O-geranyl-2-O,3-dimethylflaviolin + diphosphate. With respect to regulation, does not require any metal cations for activity. Functionally, involved in the biosynthesis of furaquinocin. Catalyzes the transfer of a geranyl group to 2-methoxy-3-methyl-flaviolin to yield 6-prenyl-2-methoxy-3-methyl-flaviolin and 7-O-geranyl-2-methoxy-3-methyl-flaviolin in a 10:1 ratio. Can also use other substrates such as flaviolin or 1,3-dihydroxy naphthalene, and can also use DMAPP as prenyl donor. The sequence is that of Furaquinocin biosynthesis prenyltransferase from Streptomyces sp. (strain KO-3988).